The primary structure comprises 473 residues: Adenosylhomocysteinase (473 aa).

Substrate-binding residues include T64, D139, and E199. 200 to 202 lines the NAD(+) pocket; the sequence is TTT. K229 and D233 together coordinate substrate. Residues N234, 263–268, E286, N321, 342–344, and N387 each bind NAD(+); these read GYGDVG and IGH.

Belongs to the adenosylhomocysteinase family. NAD(+) is required as a cofactor.

The protein localises to the cytoplasm. The catalysed reaction is S-adenosyl-L-homocysteine + H2O = L-homocysteine + adenosine. The protein operates within amino-acid biosynthesis; L-homocysteine biosynthesis; L-homocysteine from S-adenosyl-L-homocysteine: step 1/1. Its function is as follows. May play a key role in the regulation of the intracellular concentration of adenosylhomocysteine. The polypeptide is Adenosylhomocysteinase (Burkholderia thailandensis (strain ATCC 700388 / DSM 13276 / CCUG 48851 / CIP 106301 / E264)).